The following is a 177-amino-acid chain: Phycoerythrin beta subunit (177 aa).

Y18, K28, N35, and D39 together coordinate (2R,3E)-phycoerythrobilin. 15,16-dihydrobiliverdin contacts are provided by C50, D54, and C61. 3 residues coordinate (2R,3E)-phycoerythrobilin: C82, R84, and D85. R129 serves as a coordination point for 15,16-dihydrobiliverdin. N144 contacts (2R,3E)-phycoerythrobilin. The 15,16-dihydrobiliverdin site is built by Q148 and K149. Positions 154, 156, and 158 each coordinate (2R,3E)-phycoerythrobilin.

Belongs to the phycobiliprotein family. Heterotetramer of 2 different alpha chains and 2 identical beta chains which form 2 alpha-beta heterodimers within the heterotetramer. The two alpha-beta heterodimers are rotated to an open configuration in contrast to the closed configuration found in other cryptophyte species due to the insertion of a single amino acid, 'Asp-65', in a conserved region of the alpha chain. In the open form, the central chromophores are not in physical contact but are separated by a water-filled channel. In terms of processing, contains three phycoerythrobilin chromophores and one 15,16-dihydrobiliverdin chromophore with binding of the phycoerythrobilin chromophores mediated by both the alpha and beta subunits.

The protein localises to the plastid. Its subcellular location is the chloroplast thylakoid membrane. In terms of biological role, light-harvesting photosynthetic bile pigment-protein from the phycobiliprotein complex. This Hemiselmis andersenii (Cryptophyte alga) protein is Phycoerythrin beta subunit.